The following is a 153-amino-acid chain: Riboflavin synthase (153 aa).

Belongs to the DMRL synthase family. Homooligomer. The cofactor is Mg(2+).

It carries out the reaction 2 6,7-dimethyl-8-(1-D-ribityl)lumazine + H(+) = 5-amino-6-(D-ribitylamino)uracil + riboflavin. Its pathway is cofactor biosynthesis; riboflavin biosynthesis; riboflavin from 2-hydroxy-3-oxobutyl phosphate and 5-amino-6-(D-ribitylamino)uracil: step 2/2. Its activity is regulated as follows. Inhibited by EDTA. The relatively low activity of this enzyme suggested that 6,7-dimethyl-8-ribityllumazine might not be its natural substrate. This Methanothermobacter marburgensis (strain ATCC BAA-927 / DSM 2133 / JCM 14651 / NBRC 100331 / OCM 82 / Marburg) (Methanobacterium thermoautotrophicum) protein is Riboflavin synthase (ribC).